The primary structure comprises 308 residues: Pyrroline-5-carboxylate reductase 3 (308 aa).

It belongs to the pyrroline-5-carboxylate reductase family. In terms of assembly, homodecamer; composed of 5 homodimers.

Its subcellular location is the cytoplasm. It catalyses the reaction L-proline + NADP(+) = (S)-1-pyrroline-5-carboxylate + NADPH + 2 H(+). It carries out the reaction L-proline + NAD(+) = (S)-1-pyrroline-5-carboxylate + NADH + 2 H(+). It functions in the pathway amino-acid biosynthesis; L-proline biosynthesis; L-proline from L-glutamate 5-semialdehyde: step 1/1. Functionally, oxidoreductase that catalyzes the last step in proline biosynthesis, which corresponds to the reduction of pyrroline-5-carboxylate (P5C) to L-proline using NAD(P)H. Proline is synthesized from either glutamate or ornithine; both are converted to P5C, and then to proline via pyrroline-5-carboxylate reductases (PYCRs). PYCR3 is exclusively linked to the biosynthesis of proline from ornithine. The polypeptide is Pyrroline-5-carboxylate reductase 3 (Bos taurus (Bovine)).